Reading from the N-terminus, the 440-residue chain is Serine/threonine-protein kinase VRK1 (440 aa).

Residues 37-317 (WKLGLPIGQG…LLEYTEKPLY (281 aa)) enclose the Protein kinase domain. Residues 43–51 (IGQGGFGCI) and K71 contribute to the ATP site. A Glycyl lysine isopeptide (Lys-Gly) (interchain with G-Cter in SUMO2) cross-link involves residue K71. The Proton acceptor role is filled by D177. Phosphoserine; by PLK3 is present on S342. At S376 the chain carries Phosphoserine. Phosphothreonine is present on T378. Polar residues-rich tracts occupy residues 379–391 (QVQE…SVES) and 398–410 (SMSQ…SSSD). Residues 379 to 440 (QVQEAAQTRS…GSRTRKKAQK (62 aa)) form a disordered region. A required for interaction with the nucleosome region spans residues 387–393 (RSVESQG).

This sequence belongs to the protein kinase superfamily. CK1 Ser/Thr protein kinase family. VRK subfamily. As to quaternary structure, interacts with HDAC1, KAT2B, SETDB1, KDM3A and KDM4A. Associates with the nucleosome through interactions with nucleosome DNA, histone H2A and histone H2B; the interaction with H2A and H2B is mediated by the nucleosome acidic patch, a cluster of negatively charged residues of H2A and H2B forming a cleft within the nucleosome core. In terms of processing, autophosphorylated at various serine and threonine residues. Autophosphorylation does not impair its ability to phosphorylate p53/TP53. Phosphorylation by PLK3 leads to induction of Golgi fragmentation during mitosis. Highly expressed in testis. Expressed in liver, kidney and muscle. Weakly expressed in thymus, bone marrow and spleen.

Its subcellular location is the nucleus. It is found in the cytoplasm. It localises to the cajal body. It carries out the reaction L-seryl-[protein] + ATP = O-phospho-L-seryl-[protein] + ADP + H(+). It catalyses the reaction L-threonyl-[protein] + ATP = O-phospho-L-threonyl-[protein] + ADP + H(+). Its activity is regulated as follows. Active in presence of Mn(2+), Mg(2+) and Zn(2+), but is not functional with Ca(2+) or Cu(2+). Has a higher affinity for Mn(2+) than for Mg(2+). RAN inhibits its autophosphorylation and its ability to phosphorylate histone H3. Its function is as follows. Serine/threonine kinase involved in the regulation of key cellular processes including the cell cycle, nuclear condensation, transcription regulation, and DNA damage response. Controls chromatin organization and remodeling by mediating phosphorylation of histone H3 on 'Thr-4' and histone H2AX (H2aXT4ph). It also phosphorylates KAT5 in response to DNA damage, promoting KAT5 association with chromatin and histone acetyltransferase activity. Is involved in the regulation of cell cycle progression of neural progenitors, and is required for proper cortical neuronal migration. Is involved in neurite elongation and branching in motor neurons, and has an essential role in Cajal bodies assembly, acting through COIL phosphorylation and the control of coilin degradation. Involved in Golgi disassembly during the cell cycle: following phosphorylation by PLK3 during mitosis, required to induce Golgi fragmentation. Phosphorylates BANF1: disrupts its ability to bind DNA, reduces its binding to LEM domain-containing proteins and causes its relocalization from the nucleus to the cytoplasm. Phosphorylates TP53BP1 and p53/TP53 on 'Thr-18', preventing the interaction between p53/TP53 and MDM2. Phosphorylates ATF2 which activates its transcriptional activity. Phosphorylates JUN. In Mus musculus (Mouse), this protein is Serine/threonine-protein kinase VRK1.